Reading from the N-terminus, the 422-residue chain is Putative polyketide beta-ketoacyl synthase 1 (422 aa).

The region spanning 2 to 416 (TRRVAVTGIG…GFQSAVLLTG (415 aa)) is the Ketosynthase family 3 (KS3) domain. Catalysis depends on for beta-ketoacyl synthase activity residues Cys-169, His-309, and His-346.

The protein belongs to the thiolase-like superfamily. Beta-ketoacyl-ACP synthases family.

It participates in antibiotic biosynthesis; curamycin biosynthesis. This is Putative polyketide beta-ketoacyl synthase 1 (curA) from Streptomyces cyaneus (Streptomyces curacoi).